Here is a 337-residue protein sequence, read N- to C-terminus: Fructose-1,6-bisphosphatase class 1 (337 aa).

Residues Glu94, Asp116, Leu118, and Asp119 each coordinate Mg(2+). Residues Asp119–Ser122, Asn210, and Lys276 each bind substrate. Glu282 is a binding site for Mg(2+).

This sequence belongs to the FBPase class 1 family. In terms of assembly, homotetramer. The cofactor is Mg(2+).

Its subcellular location is the cytoplasm. It carries out the reaction beta-D-fructose 1,6-bisphosphate + H2O = beta-D-fructose 6-phosphate + phosphate. It functions in the pathway carbohydrate biosynthesis; gluconeogenesis. The protein is Fructose-1,6-bisphosphatase class 1 of Burkholderia multivorans (strain ATCC 17616 / 249).